The sequence spans 509 residues: Tyrosine-protein kinase Lck (509 aa).

G2 carries the N-myristoyl glycine lipid modification. Positions 2–72 (GCGCSSHPED…DNLVIALHSY (71 aa)) are interactions with CD4 and CD8. S-palmitoyl cysteine attachment occurs at residues C3 and C5. Positions 61–121 (LQDNLVIALH…PFNFVAKANS (61 aa)) constitute an SH3 domain. K99 is covalently cross-linked (Glycyl lysine isopeptide (Lys-Gly) (interchain with G-Cter in ubiquitin)). S102 carries the post-translational modification Phosphoserine. In terms of domain architecture, SH2 spans 127 to 224 (WFFKNLSRKD…GLCTRLSRPC (98 aa)). Positions 154 to 242 (RESESTAGSF…WWEDEWEVPR (89 aa)) are interaction with PTPRH. A Phosphothreonine modification is found at T159. Position 162 is a phosphoserine (S162). Y192 bears the Phosphotyrosine mark. Position 194 is a phosphoserine (S194). The 254-residue stretch at 245-498 (LKLVERLGAG…YLRSVLEDFF (254 aa)) folds into the Protein kinase domain. ATP contacts are provided by residues 251 to 259 (LGAGQFGEV) and K273. K276 is covalently cross-linked (Glycyl lysine isopeptide (Lys-Gly) (interchain with G-Cter in ubiquitin)). D364 serves as the catalytic Proton acceptor. Y394 is modified (phosphotyrosine; by autocatalysis). Y505 bears the Phosphotyrosine; by CSK mark.

Belongs to the protein kinase superfamily. Tyr protein kinase family. SRC subfamily. Binds to the cytoplasmic domain of cell surface receptors, such as AXL, CD2, CD4, CD5, CD8, CD44, CD45 and CD122. Also binds to effector molecules, such as PI4K, VAV1, RASA1, FYB1 and to other protein kinases including CDK1, RAF1, ZAP70 and SYK. Binds to phosphatidylinositol 3'-kinase (PI3K) from T-lymphocytes through its SH3 domain and to the tyrosine phosphorylated form of KHDRBS1/p70 through its SH2 domain. This interaction inhibits its tyrosine-kinase activity. Interacts with SQSTM1. Interacts with phosphorylated LIME1. Interacts with CBLB and PTPRH. Interacts with RUNX3. Forms a signaling complex with EPHA1, PTK2B and PI3-KINASE; upon activation by EFNA1 which may regulate T-lymphocyte migration. Associates with ZAP70 and RHOH; these interactions allow LCK-mediated RHOH and CD3 subunit phosphorylation in the presence of functional ZAP70. Interacts with UNC119; this interaction plays a crucial role in activation of LCK. Interacts with CEACAM1 (via cytoplasmic domain); mediates CEACAM1 phosphorylation resulting in PTPN6 recruitment that dephosphorylates TCR stimulation-induced CD247 and ZAP70. Interacts with CD160. Interacts with CD48. In terms of assembly, (Microbial infection) Interacts with herpes simplex virus 1 UL46; this interaction activates LCK. As to quaternary structure, (Microbial infection) Interacts with HIV-1 Nef through its SH3 domain. Post-translationally, autophosphorylated on Tyr-394, increasing enzymatic activity, this site is dephosphorylated by PTN22. Phosphorylated on Tyr-505 by CSK, decreasing activity. Dephosphorylated by PTPRC/CD45. Dephosphorylation at Tyr-394 by PTPN2 negatively regulates T-cell receptor signaling. Dephosphorylation at Tyr-394 by DUSP22 negatively regulates T-cell receptor signaling. Myristoylation is required prior to palmitoylation. In terms of processing, palmitoylation regulates association with the plasma membrane and could be mediated by ZDHHC2. Post-translationally, 'Lys-63'-linked ubiquitinated at Lys-99 and Lys-276 by UBR2; this modification is required for autophosphorylation at Tyr-394. Expressed specifically in lymphoid cells.

The protein localises to the cell membrane. It localises to the cytoplasm. It is found in the cytosol. It carries out the reaction L-tyrosyl-[protein] + ATP = O-phospho-L-tyrosyl-[protein] + ADP + H(+). Its activity is regulated as follows. The relative activities of the inhibitory tyrosine-protein kinase CSK and the activating tyrosine-protein phosphatase PTPRC/CD45 determine the level of LCK activity. These interactions allow rapid and efficient activation of LCK in response to TCR stimulation. Functionally, non-receptor tyrosine-protein kinase that plays an essential role in the selection and maturation of developing T-cells in the thymus and in the function of mature T-cells. Plays a key role in T-cell antigen receptor (TCR)-linked signal transduction pathways. Constitutively associated with the cytoplasmic portions of the CD4 and CD8 surface receptors. Association of the TCR with a peptide antigen-bound MHC complex facilitates the interaction of CD4 and CD8 with MHC class II and class I molecules, respectively, thereby recruiting the associated LCK protein to the vicinity of the TCR/CD3 complex. LCK then phosphorylates tyrosine residues within the immunoreceptor tyrosine-based activation motifs (ITAM) of the cytoplasmic tails of the TCR-gamma chains and CD3 subunits, initiating the TCR/CD3 signaling pathway. Once stimulated, the TCR recruits the tyrosine kinase ZAP70, that becomes phosphorylated and activated by LCK. Following this, a large number of signaling molecules are recruited, ultimately leading to lymphokine production. LCK also contributes to signaling by other receptor molecules. Associates directly with the cytoplasmic tail of CD2, which leads to hyperphosphorylation and activation of LCK. Also plays a role in the IL2 receptor-linked signaling pathway that controls the T-cell proliferative response. Binding of IL2 to its receptor results in increased activity of LCK. Is expressed at all stages of thymocyte development and is required for the regulation of maturation events that are governed by both pre-TCR and mature alpha beta TCR. Phosphorylates other substrates including RUNX3, PTK2B/PYK2, the microtubule-associated protein MAPT, RHOH or TYROBP. Interacts with FYB2. This chain is Tyrosine-protein kinase Lck (LCK), found in Homo sapiens (Human).